The primary structure comprises 331 residues: Ubiquinone biosynthesis protein UbiU (331 aa).

[4Fe-4S] cluster-binding residues include C169, C176, C193, and C232.

This sequence belongs to the peptidase U32 family. UbiU subfamily. Forms a heterodimer with UbiV. [4Fe-4S] cluster serves as cofactor.

Its pathway is cofactor biosynthesis; ubiquinone biosynthesis. Its function is as follows. Required for O(2)-independent ubiquinone (coenzyme Q) biosynthesis. Together with UbiV, is essential for the C6-hydroxylation reaction in the oxygen-independent ubiquinone biosynthesis pathway. In Escherichia coli (strain K12), this protein is Ubiquinone biosynthesis protein UbiU.